The following is a 697-amino-acid chain: Potassium-transporting ATPase ATP-binding subunit (697 aa).

Transmembrane regions (helical) follow at residues 55–75, 79–99, 245–265, and 271–291; these read PIMFVVEIGFVITFILSFFPS, SIPGWFNITVSLILLFTVLFA, LTLIFLIVVVTLPIFTNYLGF, and VLVALLVCLIPTTIGGLLSAI. Asp324 functions as the 4-aspartylphosphate intermediate in the catalytic mechanism. ATP-binding positions include Asp361, Glu365, 393–400, and Lys412; that span reads FKAETRMS. Residues Asp535 and Asp539 each coordinate Mg(2+). Transmembrane regions (helical) follow at residues 605–625, 633–653, and 677–697; these read FAIIPAMFTLAIPQMEALNIM, AILSALLFNAVIIPLLIPLAM, and GGVIVPFIGIKVIDIIVGLFI.

Belongs to the cation transport ATPase (P-type) (TC 3.A.3) family. Type IA subfamily. In terms of assembly, the system is composed of three essential subunits: KdpA, KdpB and KdpC.

It is found in the cell membrane. It carries out the reaction K(+)(out) + ATP + H2O = K(+)(in) + ADP + phosphate + H(+). Its function is as follows. Part of the high-affinity ATP-driven potassium transport (or Kdp) system, which catalyzes the hydrolysis of ATP coupled with the electrogenic transport of potassium into the cytoplasm. This subunit is responsible for energy coupling to the transport system and for the release of the potassium ions to the cytoplasm. The protein is Potassium-transporting ATPase ATP-binding subunit of Bacillus cereus (strain AH820).